The following is an 88-amino-acid chain: Small ribosomal subunit protein uS19 (88 aa).

Belongs to the universal ribosomal protein uS19 family.

Functionally, protein S19 forms a complex with S13 that binds strongly to the 16S ribosomal RNA. In Chlamydia abortus (strain DSM 27085 / S26/3) (Chlamydophila abortus), this protein is Small ribosomal subunit protein uS19.